The following is a 118-amino-acid chain: uncharacterized protein (118 aa).

A disulfide bridge links cysteine 11 with cysteine 14.

It belongs to the ArsC family.

This is an uncharacterized protein from Bacillus subtilis (strain 168).